A 193-amino-acid chain; its full sequence is Ion-translocating oxidoreductase complex subunit A (193 aa).

The next 6 helical transmembrane spans lie at 5–25, 47–67, 72–92, 102–122, 134–154, and 171–191; these read FFFI…FLGL, FVVV…LLPF, LRII…EIIL, ILGI…IPLF, ILYA…FSSI, and PIVL…KGLV.

Belongs to the NqrDE/RnfAE family. As to quaternary structure, the complex is composed of six subunits: RnfA, RnfB, RnfC, RnfD, RnfE and RnfG.

The protein resides in the cell inner membrane. Its function is as follows. Part of a membrane-bound complex that couples electron transfer with translocation of ions across the membrane. The sequence is that of Ion-translocating oxidoreductase complex subunit A from Buchnera aphidicola subsp. Schizaphis graminum (strain Sg).